The primary structure comprises 287 residues: NAD kinase (287 aa).

The active-site Proton acceptor is the Asp-70. Residues 70–71, 144–145, Arg-155, Lys-172, Asp-174, 185–190, and Gln-244 each bind NAD(+); these read DG, ND, and TAYSLS.

This sequence belongs to the NAD kinase family. A divalent metal cation serves as cofactor.

It is found in the cytoplasm. The enzyme catalyses NAD(+) + ATP = ADP + NADP(+) + H(+). Involved in the regulation of the intracellular balance of NAD and NADP, and is a key enzyme in the biosynthesis of NADP. Catalyzes specifically the phosphorylation on 2'-hydroxyl of the adenosine moiety of NAD to yield NADP. The polypeptide is NAD kinase (Solibacter usitatus (strain Ellin6076)).